We begin with the raw amino-acid sequence, 408 residues long: Intracellular coagulation inhibitor 2 (408 aa).

The signal sequence occupies residues 1–22 (MLSRRTLDCCLVMLIVSTTFCQ). The cysteines at positions 50 and 249 are disulfide-linked. The N-linked (GlcNAc...) asparagine glycan is linked to Asn174.

Belongs to the serpin family. As to quaternary structure, monomer. Forms a covalent heterodimer with clotting factor C chain B. Forms a covalent heterodimer with proclotting enzyme heavy chain. As to expression, specifically expressed in hemocytes (at protein level).

It is found in the secreted. Functionally, serine protease inhibitor that inhibits proclotting enzyme and to a lesser extent clotting factor C and clotting factor G. This is Intracellular coagulation inhibitor 2 from Tachypleus tridentatus (Japanese horseshoe crab).